Consider the following 394-residue polypeptide: Mannosyl-3-phosphoglycerate synthase (394 aa).

Belongs to the glycosyltransferase 2 family.

The protein localises to the cytoplasm. It carries out the reaction (2R)-3-phosphoglycerate + GDP-alpha-D-mannose = 2-O-(alpha-D-mannosyl)-3-phosphoglycerate + GDP + H(+). The protein operates within carbohydrate biosynthesis; 2-(alpha-D-mannosyl)-D-glycerate biosynthesis; 2-(alpha-D-mannosyl)-D-glycerate from GDP-alpha-D-mannose (MPG route): step 1/2. Transfers a mannosyl group from GDP-mannose to phosphoglycerate to form mannosyl-3-phosphoglycerate (MPG). The sequence is that of Mannosyl-3-phosphoglycerate synthase (mngA) from Pyrococcus abyssi (strain GE5 / Orsay).